The chain runs to 427 residues: Adenylosuccinate synthetase (427 aa).

Residues 12–18 (GDEGKGK) and 40–42 (GHT) contribute to the GTP site. The active-site Proton acceptor is D13. Residues D13 and G40 each contribute to the Mg(2+) site. Residues 13–16 (DEGK), 38–41 (NAGH), T127, R141, Q222, T237, and R301 contribute to the IMP site. The active-site Proton donor is H41. Residue 297-303 (VVTKRPR) coordinates substrate. GTP is bound by residues R303, 329–331 (SLD), and 411–413 (AVG).

This sequence belongs to the adenylosuccinate synthetase family. In terms of assembly, homodimer. Mg(2+) is required as a cofactor.

The protein localises to the cytoplasm. The enzyme catalyses IMP + L-aspartate + GTP = N(6)-(1,2-dicarboxyethyl)-AMP + GDP + phosphate + 2 H(+). The protein operates within purine metabolism; AMP biosynthesis via de novo pathway; AMP from IMP: step 1/2. In terms of biological role, plays an important role in the de novo pathway of purine nucleotide biosynthesis. Catalyzes the first committed step in the biosynthesis of AMP from IMP. The sequence is that of Adenylosuccinate synthetase from Leuconostoc citreum (strain KM20).